The sequence spans 59 residues: UPF0509 protein KPK_3153 (59 aa).

This sequence belongs to the UPF0509 family.

This Klebsiella pneumoniae (strain 342) protein is UPF0509 protein KPK_3153.